An 83-amino-acid polypeptide reads, in one-letter code: Phosphoribosylformylglycinamidine synthase subunit PurS (83 aa).

Belongs to the PurS family. In terms of assembly, homodimer. Part of the FGAM synthase complex composed of 1 PurL, 1 PurQ and 2 PurS subunits.

Its subcellular location is the cytoplasm. It carries out the reaction N(2)-formyl-N(1)-(5-phospho-beta-D-ribosyl)glycinamide + L-glutamine + ATP + H2O = 2-formamido-N(1)-(5-O-phospho-beta-D-ribosyl)acetamidine + L-glutamate + ADP + phosphate + H(+). It functions in the pathway purine metabolism; IMP biosynthesis via de novo pathway; 5-amino-1-(5-phospho-D-ribosyl)imidazole from N(2)-formyl-N(1)-(5-phospho-D-ribosyl)glycinamide: step 1/2. Its function is as follows. Part of the phosphoribosylformylglycinamidine synthase complex involved in the purines biosynthetic pathway. Catalyzes the ATP-dependent conversion of formylglycinamide ribonucleotide (FGAR) and glutamine to yield formylglycinamidine ribonucleotide (FGAM) and glutamate. The FGAM synthase complex is composed of three subunits. PurQ produces an ammonia molecule by converting glutamine to glutamate. PurL transfers the ammonia molecule to FGAR to form FGAM in an ATP-dependent manner. PurS interacts with PurQ and PurL and is thought to assist in the transfer of the ammonia molecule from PurQ to PurL. The protein is Phosphoribosylformylglycinamidine synthase subunit PurS of Methanocaldococcus jannaschii (strain ATCC 43067 / DSM 2661 / JAL-1 / JCM 10045 / NBRC 100440) (Methanococcus jannaschii).